Reading from the N-terminus, the 398-residue chain is Putative isocitrate lyase subunit B (398 aa).

The protein belongs to the isocitrate lyase/PEP mutase superfamily. Isocitrate lyase family. Mg(2+) is required as a cofactor.

It catalyses the reaction D-threo-isocitrate = glyoxylate + succinate. In terms of biological role, together with AceAa, they could catalyze the formation of succinate and glyoxylate from isocitrate. The protein is Putative isocitrate lyase subunit B (aceAb) of Mycobacterium tuberculosis (strain ATCC 25618 / H37Rv).